An 870-amino-acid chain; its full sequence is MMPPPFMPPPGLPPPFPPMGLPPMSQRPPAIPPMPPGILPPMLPPMGAPPPLTQIPGMVPPMMPGMLMPAVPVTAATAPGADTASSAVAGTGPPRALWSEHVAPDGRIYYYNADDKQSVWEKPSVLKSKAELLLSQCPWKEYKSDTGKPYYYNNQSQESRWTRPKDLDDLEALVKQESAGKQQTQQLQTLQPQPPQPQPDPPPIPPGPIPVPMALLEPEPGRSEDCDVLEAAQPLEQGFLQREEGPSSSTGQHRQPQEEEEAKPEPERSGLSWSNREKAKQAFKELLRDKAVPSNASWEQAMKMVVTDPRYSALPKLSEKKQAFNAYKAQREKEEKEEARLRAKEAKQTLQHFLEQHERMTSTTRYRRAEQTFGDLEVWAVVPERERKEVYDDVLFFLAKKEKEQAKQLRRRNIQALKSILDGMSSVNFQTTWSQAQQYLMDNPSFAQDQQLQNMDKEDALICFEEHIRALEREEEEERERARLRERRQQRKNREAFQSFLDELHETGQLHSMSTWMELYPAVSTDVRFANMLGQPGSTPLDLFKFYVEELKARFHDEKKIIKDILKDRGFCVEVNTAFEDFAHVISFDKRAAALDAGNIKLTFNSLLEKAEARETEREKEEARRMRRREAAFRSMLRQAVPALELGTAWEEVRERFVCDSAFEQITLESERIRLFREFLQVLEQTECQHLHTKGRKHGRKGKKHHRKRSHSPSGSESDEEELPPPSLRPPKRRRRNPSESGSEPSSSLDSVESGGAALGGPGSPSSHLLLGSDHGLRKTKKPKKKTKKRRHKSTSPDSETDPEDKAGKESEDREQEQDREPRQAELPNRSPGFGIKKEKTGWDTSESELSEGELERRRRTLLQQLDDHQ.

2 consecutive WW domains span residues 92-125 (GPPRALWSEHVAPDGRIYYYNADDKQSVWEKPSV) and 133-166 (LLSQCPWKEYKSDTGKPYYYNNQSQESRWTRPKD). Residues 146-277 (TGKPYYYNNQ…RSGLSWSNRE (132 aa)) are disordered. N6-acetyllysine is present on Lys-148. A Glycyl lysine isopeptide (Lys-Gly) (interchain with G-Cter in SUMO2) cross-link involves residue Lys-175. The span at 182–191 (QQTQQLQTLQ) shows a compositional bias: low complexity. Pro residues predominate over residues 192-211 (PQPPQPQPDPPPIPPGPIPV). 6 FF domains span residues 276 to 330 (REKA…YKAQ), 340 to 397 (RLRA…VLFF), 410 to 470 (RRRN…HIRA), 490 to 550 (QRKN…YVEE), 554 to 610 (RFHD…LLEK), and 625 to 682 (RMRR…FLQV). Residues 604–640 (FNSLLEKAEARETEREKEEARRMRRREAAFRSMLRQA) adopt a coiled-coil conformation. The interval 690–870 (HLHTKGRKHG…TLLQQLDDHQ (181 aa)) is disordered. Over residues 691–711 (LHTKGRKHGRKGKKHHRKRSH) the composition is skewed to basic residues. 2 stretches are compositionally biased toward low complexity: residues 739–756 (SESGSEPSSSLDSVESGG) and 764–774 (SPSSHLLLGSD). At Ser-764 the chain carries Phosphoserine. Positions 778–794 (RKTKKPKKKTKKRRHKS) are enriched in basic residues. Over residues 804-824 (EDKAGKESEDREQEQDREPRQ) the composition is skewed to basic and acidic residues. A Phosphoserine modification is found at Ser-831. A Glycyl lysine isopeptide (Lys-Gly) (interchain with G-Cter in SUMO2) cross-link involves residue Lys-837. Ser-851 carries the post-translational modification Phosphoserine.

The protein belongs to the PRPF40 family. Interacts with the N-terminus of HD.

It is found in the nucleus speckle. May be involved in pre-mRNA splicing. The chain is Pre-mRNA-processing factor 40 homolog B (Prpf40b) from Mus musculus (Mouse).